The following is a 55-amino-acid chain: Large ribosomal subunit protein bL33 (55 aa).

It belongs to the bacterial ribosomal protein bL33 family.

The protein is Large ribosomal subunit protein bL33 of Bradyrhizobium sp. (strain BTAi1 / ATCC BAA-1182).